We begin with the raw amino-acid sequence, 840 residues long: Homeobox-leucine zipper protein HOX9 (840 aa).

Disordered regions lie at residues 1 to 26 (MAAAVAMRSGSGSDGGGGGYDKAGMD) and 135 to 160 (NPSLGNDTSCESNVTTPQNPLRDASN). The segment covering 12 to 21 (GSDGGGGGYD) has biased composition (gly residues). The homeobox DNA-binding region spans 26-89 (DSGKYVRYTP…NRRCRDKQRK (64 aa)). Residues 86–135 (KQRKEASRLQAVNRKLTAMNKLLMEENERLQKQVSQLVHENAYMKQQLQN) are a coiled coil. The START domain occupies 157-385 (DASNPSGLLT…IAQETSGEVV (229 aa)).

The protein belongs to the HD-ZIP homeobox family. Class III subfamily. Expressed in seedlings, roots, stems, leaf sheaths and blades and panicles.

It localises to the nucleus. In terms of biological role, probable transcription factor. In Oryza sativa subsp. japonica (Rice), this protein is Homeobox-leucine zipper protein HOX9 (HOX9).